Reading from the N-terminus, the 545-residue chain is Chaperonin GroEL 1 (545 aa).

ATP contacts are provided by residues 29–32, 86–90, glycine 413, 479–481, and aspartate 495; these read TLGP, DGTTT, and DAA. Residues 525–545 form a disordered region; that stretch reads PEPKENNPAGSGAGMGGDFDY. The span at 535–545 shows a compositional bias: gly residues; sequence SGAGMGGDFDY.

The protein belongs to the chaperonin (HSP60) family. In terms of assembly, forms a cylinder of 14 subunits composed of two heptameric rings stacked back-to-back. Interacts with the co-chaperonin GroES.

It localises to the cytoplasm. The catalysed reaction is ATP + H2O + a folded polypeptide = ADP + phosphate + an unfolded polypeptide.. Its function is as follows. Together with its co-chaperonin GroES, plays an essential role in assisting protein folding. The GroEL-GroES system forms a nano-cage that allows encapsulation of the non-native substrate proteins and provides a physical environment optimized to promote and accelerate protein folding. In Thermostichus vulcanus (Synechococcus vulcanus), this protein is Chaperonin GroEL 1.